We begin with the raw amino-acid sequence, 339 residues long: Ribosomal RNA small subunit methyltransferase H (339 aa).

S-adenosyl-L-methionine-binding positions include 52-54 (GGH), D71, F98, D130, and Q137.

This sequence belongs to the methyltransferase superfamily. RsmH family.

It is found in the cytoplasm. It carries out the reaction cytidine(1402) in 16S rRNA + S-adenosyl-L-methionine = N(4)-methylcytidine(1402) in 16S rRNA + S-adenosyl-L-homocysteine + H(+). Functionally, specifically methylates the N4 position of cytidine in position 1402 (C1402) of 16S rRNA. The polypeptide is Ribosomal RNA small subunit methyltransferase H (Corynebacterium diphtheriae (strain ATCC 700971 / NCTC 13129 / Biotype gravis)).